The following is a 529-amino-acid chain: Bifunctional purine biosynthesis protein PurH (529 aa).

An MGS-like domain is found at 1–148 (MQQRRPVRRA…KNHKDVAIVV (148 aa)).

This sequence belongs to the PurH family.

The enzyme catalyses (6R)-10-formyltetrahydrofolate + 5-amino-1-(5-phospho-beta-D-ribosyl)imidazole-4-carboxamide = 5-formamido-1-(5-phospho-D-ribosyl)imidazole-4-carboxamide + (6S)-5,6,7,8-tetrahydrofolate. It carries out the reaction IMP + H2O = 5-formamido-1-(5-phospho-D-ribosyl)imidazole-4-carboxamide. The protein operates within purine metabolism; IMP biosynthesis via de novo pathway; 5-formamido-1-(5-phospho-D-ribosyl)imidazole-4-carboxamide from 5-amino-1-(5-phospho-D-ribosyl)imidazole-4-carboxamide (10-formyl THF route): step 1/1. It participates in purine metabolism; IMP biosynthesis via de novo pathway; IMP from 5-formamido-1-(5-phospho-D-ribosyl)imidazole-4-carboxamide: step 1/1. The protein is Bifunctional purine biosynthesis protein PurH of Salmonella paratyphi B (strain ATCC BAA-1250 / SPB7).